We begin with the raw amino-acid sequence, 383 residues long: tRNA (guanine-N(7)-)-methyltransferase non-catalytic subunit wuho (383 aa).

5 WD repeats span residues 61-101 (NLEV…ALLL), 105-144 (ALAR…APPK), 148-187 (GHLS…DIHS), 191-231 (GHKE…EVLQ), and 289-329 (AGSW…QAES).

This sequence belongs to the WD repeat TRM82 family. Forms a heterodimer with the catalytic subunit Mettl1. Interacts with mei-P26 and weakly interacts with bgcn; required for the function or formation of the mei-P26-bgcn-bam-sxl complex. Interacts with nanos; may be involved in mei-P26-dependent derepression of the BMP signaling pathway. Interacts with Myc; the interaction may be mediated by mei-P26 and may be involved in the regulation of ribosome biogenesis. As to expression, in testis, it is present at high level in hub cells, a niche for germline stem cells of testis. Ubiquitously expressed in all testicular cells throughout spermatogenesis. Ubiquitously expressed in all germline and somatic cells of the ovary.

The protein resides in the nucleus. The protein localises to the cytoplasm. It participates in tRNA modification; N(7)-methylguanine-tRNA biosynthesis. In terms of biological role, required for the Mettl1-dependent formation of N(7)-methylguanine at position 46 (m7G46) in tRNA. In the Mettl1-wuho methyltransferase complex, it is required to stabilize and induce conformational changes of the catalytic subunit. Required for binding of nanos mRNA and repression of translation by the mei-P26-bgcn-bam-sxl complex. May cooperate with mei-P26 and nanos to derepress the BMP signaling pathway. May cooperate with mei-P26 to suppress expression of a subset of microRNAs. May cooperate with mei-P26 to regulate bam expression levels in germline cells during gametogenesis. Required to promote mitosis to meiosis transition during gametogenesis. May regulate germline cell division in part by regulating ribosome biogenesis. The chain is tRNA (guanine-N(7)-)-methyltransferase non-catalytic subunit wuho from Drosophila mojavensis (Fruit fly).